The following is a 286-amino-acid chain: Polyamine aminopropyltransferase (286 aa).

A PABS domain is found at 5-238 (TMWHETLHDQ…GIMTFAWATD (234 aa)). Gln-33 contributes to the S-methyl-5'-thioadenosine binding site. Spermidine is bound by residues His-64 and Asp-88. S-methyl-5'-thioadenosine contacts are provided by residues Glu-108 and 140–141 (DG). Asp-158 serves as the catalytic Proton acceptor. 158-161 (DCTD) is a binding site for spermidine. Residue Pro-165 coordinates S-methyl-5'-thioadenosine.

This sequence belongs to the spermidine/spermine synthase family. In terms of assembly, homodimer or homotetramer.

It is found in the cytoplasm. The enzyme catalyses S-adenosyl 3-(methylsulfanyl)propylamine + putrescine = S-methyl-5'-thioadenosine + spermidine + H(+). It participates in amine and polyamine biosynthesis; spermidine biosynthesis; spermidine from putrescine: step 1/1. In terms of biological role, catalyzes the irreversible transfer of a propylamine group from the amino donor S-adenosylmethioninamine (decarboxy-AdoMet) to putrescine (1,4-diaminobutane) to yield spermidine. This is Polyamine aminopropyltransferase from Salmonella enteritidis PT4 (strain P125109).